A 135-amino-acid polypeptide reads, in one-letter code: MATFHFDLVSPEKIAFSGEVDQVDVPGQEGDFGVLAGHAPFVATLRPGILTVTAGGTQQKIIVLGGLAEISEKGLTILADVATSLKELDQTAFAAEISGMEAKLNEKQGNELDRAIERLDHFKTIQQQLNTTALH.

Belongs to the ATPase epsilon chain family. F-type ATPases have 2 components, CF(1) - the catalytic core - and CF(0) - the membrane proton channel. CF(1) has five subunits: alpha(3), beta(3), gamma(1), delta(1), epsilon(1). CF(0) has three main subunits: a, b and c.

It is found in the cell inner membrane. In terms of biological role, produces ATP from ADP in the presence of a proton gradient across the membrane. The sequence is that of ATP synthase epsilon chain from Bradyrhizobium sp. (strain BTAi1 / ATCC BAA-1182).